The chain runs to 798 residues: MGFDSPRGRGGGGFRGGRGGGSGFTPRGGGGGFRGGDRGRSPGGFRGGDRGRSSSGFRGGDRGRSPGGFRGDREGGFSPRGRGGGFRGGDRGGFRGGDRGGSPWRGGDRGNFRGGDRGGSPWRGGDRGVANRGRGDFSGGSRGGNKFSPRGGGRGGFTPRGRGGNDFSPRGGRGNFQSRGGGSRVGFSDKRKQYDSDGDDDEEEEVPKKKLATGTPFAKQTKPVEDDSGEDEEDEEESDEEPQPPKKTAKSAIATAAEDSDDDEEDDDEEEEESDDDAPQVKKSVAVEEDEEDEEDEEEIEMDEEDEEEEEDEEETEPVAKTPAVKSSLKSVDSTKGKQVNLSKVATPTTVDKKAPATPHPAKTSKNAAGDVPKLNFDDDSDEEDEEDEEVEEEDEEEEEEEEDVPAKKAPVLKQSLSQIAQAIEEDSDDEDEDEEEEEDEEDEEEEEDTTNVPLIKSKADLLKQIAANRAAASAAQDSDEDEDEEDEEDVEEEDEEEEEEEDIPAVKPKVTEKQGGVKRKLDEPTVASKQVKSDGKSIISEEERRRQDRDSRSLFIKEIAKKAKDAEITGLVTGLDSFRRKKNSNFGWLVFNTVADCKKAHDVLSKSKIQGKALYVDFCLSESKAPKEHGVRPINPLQLFINALPGTCNNTDLKNIFRSSTDIKILHASGQPNSKKRAFITFGTVEDAQAAFAKSNGLKVNNHLVDVFYARHQETKVDVKPKKAATPAVQKKIVPKVAADSSGDDSEEVASSDEGIQEVEEEQPKQKKLVKKVEPKTIPRVQQKKPQFKKTGFKGKK.

Residues 1–548 form a disordered region; sequence MGFDSPRGRG…IISEEERRRQ (548 aa). The segment covering 8–34 has biased composition (gly residues); it reads GRGGGGFRGGRGGGSGFTPRGGGGGFR. Composition is skewed to basic and acidic residues over residues 59 to 75, 88 to 98, and 106 to 116; these read GGDR…DREG, GGDRGGFRGGD, and GGDRGNFRGGD. 2 stretches are compositionally biased toward gly residues: residues 150–164 and 171–184; these read RGGG…GRGG and GGRG…GGSR. 4 stretches are compositionally biased toward acidic residues: residues 196 to 205, 226 to 242, 258 to 278, and 287 to 317; these read SDGDDDEEEE, DDSG…DEEP, EDSD…DDDA, and VEED…EETE. The segment covering 328-350 has biased composition (polar residues); it reads SLKSVDSTKGKQVNLSKVATPTT. Acidic residues-rich tracts occupy residues 378–404 and 424–450; these read DDDS…EEED and IEED…EEDT. Residues 467-476 show a composition bias toward low complexity; it reads AANRAAASAA. A compositionally biased stretch (acidic residues) spans 478–504; it reads DSDEDEDEEDEEDVEEEDEEEEEEEDI. Residues 532–548 show a composition bias toward basic and acidic residues; it reads VKSDGKSIISEEERRRQ. An RRM domain is found at 638 to 713; it reads LQLFINALPG…HLVDVFYARH (76 aa). The disordered stretch occupies residues 736-798; the sequence is PKVAADSSGD…FKKTGFKGKK (63 aa). Over residues 743-762 the composition is skewed to acidic residues; sequence SGDDSEEVASSDEGIQEVEE. Basic residues predominate over residues 783-798; the sequence is QQKKPQFKKTGFKGKK.

Identified in an mRNP granule complex containing untranslated mRNAs.

The protein localises to the nucleus. It localises to the nucleolus. Its function is as follows. Nucleolin is the major nucleolar protein of growing eukaryotic cells. It is found associated with intranucleolar chromatin and pre-ribosomal particles. It induces chromatin decondensation by binding to histone H1. It is thought to play a role in pre-rRNA transcription and ribosome assembly. May play a role in the process of transcriptional elongation. Involved in phase separation into sub-nucleolar condensates. This is Nucleolin homolog 1 from Caenorhabditis elegans.